We begin with the raw amino-acid sequence, 141 residues long: Hemoglobin subunit alpha (141 aa).

A Globin domain is found at 1 to 141 (VLSSTDKSNV…VSTVLTSKYR (141 aa)). Ser-3 carries the post-translational modification Phosphoserine. 2 positions are modified to N6-succinyllysine: Lys-7 and Lys-11. The residue at position 16 (Lys-16) is an N6-acetyllysine; alternate. Lys-16 carries the N6-succinyllysine; alternate modification. Tyr-24 is modified (phosphotyrosine). Position 35 is a phosphoserine (Ser-35). Residue Lys-40 is modified to N6-succinyllysine. Residue His-58 coordinates O2. His-87 contributes to the heme b binding site. The residue at position 102 (Ser-102) is a Phosphoserine. The residue at position 108 (Thr-108) is a Phosphothreonine. Ser-124 and Ser-131 each carry phosphoserine. 2 positions are modified to phosphothreonine: Thr-134 and Thr-137. Ser-138 is modified (phosphoserine).

It belongs to the globin family. In terms of assembly, heterotetramer of two alpha chains and two beta chains. As to expression, red blood cells.

Functionally, involved in oxygen transport from the lung to the various peripheral tissues. Hemopressin acts as an antagonist peptide of the cannabinoid receptor CNR1. Hemopressin-binding efficiently blocks cannabinoid receptor CNR1 and subsequent signaling. In Pteropus alecto (Black flying fox), this protein is Hemoglobin subunit alpha (HBA).